The following is a 76-amino-acid chain: Theta defensin subunit C (76 aa).

Positions 1–22 (MRTFAFLTAMLLLVALHAQAEA) are cleaved as a signal peptide. Residues 23-64 (RQARADEAAIQEQPGADDQGMAHSFTRNESAVLPLSESERGL) constitute a propeptide that is removed on maturation. Arginine 65 participates in a covalent cross-link: Cyclopeptide (Arg-Cys) (interchain with C-73 in subunit A); in form BTD-4. Cysteine 68 and cysteine 73 form a disulfide bridge. Residue cysteine 73 forms a Cyclopeptide (Cys-Arg) (interchain with R-65 in subunit A); in form BTD-4 linkage. The propeptide occupies 74–76 (RLL).

This sequence belongs to the alpha-defensin family. Theta subfamily. BTD-4 is a cyclic heterodimer composed of subunits A and C; disulfide-linked. Post-translationally, forms a cyclic peptide with subunit A (BTD-4). An additional intersubunit disulfide bond is formed.

In terms of biological role, BTD-4 has antimicrobial activity against the Gram-negative bacterium E.coli ML35, the Gram-positive bacterium S.aureus 502a, and the fungus C.albicans 16820. The protein is Theta defensin subunit C (BTDC) of Papio anubis (Olive baboon).